The sequence spans 185 residues: Large ribosomal subunit protein uL5 (185 aa).

The protein belongs to the universal ribosomal protein uL5 family. Part of the 50S ribosomal subunit; part of the 5S rRNA/L5/L18/L25 subcomplex. Contacts the 5S rRNA and the P site tRNA. Forms a bridge to the 30S subunit in the 70S ribosome.

This is one of the proteins that bind and probably mediate the attachment of the 5S RNA into the large ribosomal subunit, where it forms part of the central protuberance. In the 70S ribosome it contacts protein S13 of the 30S subunit (bridge B1b), connecting the 2 subunits; this bridge is implicated in subunit movement. Contacts the P site tRNA; the 5S rRNA and some of its associated proteins might help stabilize positioning of ribosome-bound tRNAs. In Bartonella tribocorum (strain CIP 105476 / IBS 506), this protein is Large ribosomal subunit protein uL5.